We begin with the raw amino-acid sequence, 245 residues long: Biosynthetic peptidoglycan transglycosylase (245 aa).

The chain crosses the membrane as a helical span at residues 10-30; that stretch reads FLALLFVVATLAQLWYLGQVL. Residues 224 to 245 form a disordered region; the sequence is DPGTVPLPPPPEPTAPPEGNTQ. The segment covering 226–239 has biased composition (pro residues); the sequence is GTVPLPPPPEPTAP.

This sequence belongs to the glycosyltransferase 51 family.

The protein resides in the cell inner membrane. The catalysed reaction is [GlcNAc-(1-&gt;4)-Mur2Ac(oyl-L-Ala-gamma-D-Glu-L-Lys-D-Ala-D-Ala)](n)-di-trans,octa-cis-undecaprenyl diphosphate + beta-D-GlcNAc-(1-&gt;4)-Mur2Ac(oyl-L-Ala-gamma-D-Glu-L-Lys-D-Ala-D-Ala)-di-trans,octa-cis-undecaprenyl diphosphate = [GlcNAc-(1-&gt;4)-Mur2Ac(oyl-L-Ala-gamma-D-Glu-L-Lys-D-Ala-D-Ala)](n+1)-di-trans,octa-cis-undecaprenyl diphosphate + di-trans,octa-cis-undecaprenyl diphosphate + H(+). Its pathway is cell wall biogenesis; peptidoglycan biosynthesis. In terms of biological role, peptidoglycan polymerase that catalyzes glycan chain elongation from lipid-linked precursors. This is Biosynthetic peptidoglycan transglycosylase from Alcanivorax borkumensis (strain ATCC 700651 / DSM 11573 / NCIMB 13689 / SK2).